The chain runs to 2178 residues: Streptococcal hemagglutinin (2178 aa).

A signal peptide spans 1–90 (MFFKRQKGQY…AVVTSSSVYA (90 aa)). The non-repeat region 1 (NR1) stretch occupies residues 91 to 137 (EEEQALEKVIDTRDVLATRGEAVLSEEAATTLSSEGANPVESLSDTL). Residues 138-219 (SASESASANS…SLISSDSSNS (82 aa)) are ser-rich region 1 (SR1). Positions 192–244 (TSQSFSSTTSSTQSSNNESLISSDSSNSLNTNQSVSARNQNARVRTRRAVAAN) are enriched in low complexity. Disordered stretches follow at residues 192–246 (TSQS…ANDT), 495–557 (VSAS…SVSA), 584–653 (SAST…SVSA), 836–857 (SASTSASVSASESASTSASVSA), 884–917 (SASTSASVSASESASTSASVSASESASTSASVSA), 944–993 (SAST…SESA), 1020–1289 (SASV…SVSA), 1341–1390 (ASTS…ESAS), 1488–1685 (SASV…SVSA), 1725–1901 (ASTS…SAST), and 2119–2151 (LSQSLSDSQSTSATQSMHDRISKGQLPRTGESE). The non-repeat region 2 (NR2) stretch occupies residues 220 to 449 (LNTNQSVSAR…ANRVVKDLQI (230 aa)). The tract at residues 450 to 2143 (SKSNSASQSS…SMHDRISKGQ (1694 aa)) is ser-rich region 2 (SR2). Low complexity predominate over residues 2119–2130 (LSQSLSDSQSTS). Residues 2144–2148 (LPRTG) carry the LPXTG sorting signal motif. Pentaglycyl murein peptidoglycan amidated threonine is present on T2147. Positions 2148–2178 (GESESKASILALGIGALGLAFKKRKKNESED) are cleaved as a propeptide — removed by sortase.

Belongs to the serine-rich repeat protein (SRRP) family. In terms of processing, the protein is glycosylated in vivo; constructs without SR1 and SR2 are not glycosylated.

Its subcellular location is the secreted. It localises to the cell wall. In terms of biological role, a cell wall protein involved with PadA in host cell interactions required for colonization and pathogensis. Mediates hemagglutination and adherence to ghst glycoproteins. Recognizes fetuin-A (AHSG), a highly glycosylated human plasma protein, also involved in recognition of human platelets, probably via platelet glycoprotein Ib alpha (GP1BA). Acts in concert with PadA to promote binding to glycosylated human fibronectin (FN1) and vitronectin (VTN), and biofilm formation. Plays a major role in fibronectin and vitronectin binding; binding is mediated by glycosylated regions. Probably mediates interaction of PadA with resting platelets. This chain is Streptococcal hemagglutinin, found in Streptococcus gordonii (strain Challis / ATCC 35105 / BCRC 15272 / CH1 / DL1 / V288).